The sequence spans 80 residues: Acyl carrier protein (80 aa).

The Carrier domain maps to 4–79; it reads DEVKGQVYDI…DAINYIVEKK (76 aa). O-(pantetheine 4'-phosphoryl)serine is present on Ser39.

It belongs to the acyl carrier protein (ACP) family. 4'-phosphopantetheine is transferred from CoA to a specific serine of apo-ACP by AcpS. This modification is essential for activity because fatty acids are bound in thioester linkage to the sulfhydryl of the prosthetic group.

Its subcellular location is the cytoplasm. It functions in the pathway lipid metabolism; fatty acid biosynthesis. Carrier of the growing fatty acid chain in fatty acid biosynthesis. This Chloroherpeton thalassium (strain ATCC 35110 / GB-78) protein is Acyl carrier protein.